Here is a 385-residue protein sequence, read N- to C-terminus: Exopolygalacturonase rpg15 (385 aa).

The signal sequence occupies residues 1–26 (MVRFISFTSPIAALLLLSFGVKHAST). 4 N-linked (GlcNAc...) asparagine glycosylation sites follow: N143, N161, N164, and N180. 4 PbH1 repeats span residues 165 to 195 (STNL…DLYH), 196 to 217 (SSGI…AIKE), 219 to 241 (VEKV…GSLG), and 249 to 270 (VKHV…RVKT). D210 serves as the catalytic Proton donor. The cysteines at positions 212 and 229 are disulfide-linked. N-linked (GlcNAc...) asparagine glycosylation occurs at N226. H233 is a catalytic residue. N256, N319, and N343 each carry an N-linked (GlcNAc...) asparagine glycan. C344 and C350 are oxidised to a cystine. Residues 350–376 (CSDITFSGIDITKASNTTDNVCVYLEG) form a PbH1 5 repeat. A glycan (N-linked (GlcNAc...) asparagine) is linked at N365.

The protein belongs to the glycosyl hydrolase 28 family. Post-translationally, N-glycosylated.

Its subcellular location is the secreted. It catalyses the reaction [(1-&gt;4)-alpha-D-galacturonosyl](n) + H2O = alpha-D-galacturonate + [(1-&gt;4)-alpha-D-galacturonosyl](n-1). Specific in hydrolyzing the terminal glycosidic bond of polygalacturonic acid and oligogalacturonates. The sequence is that of Exopolygalacturonase rpg15 from Rhizopus delemar (strain RA 99-880 / ATCC MYA-4621 / FGSC 9543 / NRRL 43880) (Mucormycosis agent).